We begin with the raw amino-acid sequence, 267 residues long: UDP-glucose:undecaprenyl-phosphate glucose-1-phosphate transferase (267 aa).

A helical membrane pass occupies residues 83–103 (VAAALLTALFAPLLLLAALAI).

The protein belongs to the bacterial sugar transferase family.

It is found in the cell membrane. It carries out the reaction di-trans,octa-cis-undecaprenyl phosphate + UDP-alpha-D-glucose = alpha-D-glucosyl di-trans,octa-cis-undecaprenyl diphosphate + UMP. Its function is as follows. Is likely the initiating enzyme for holdfast polysaccharide synthesis. Catalyzes the transfer of the glucose-1-phosphate moiety from UDP-Glc onto the carrier lipid undecaprenyl phosphate (C55-P), forming a phosphoanhydride bond yielding to glucosyl-pyrophosphoryl-undecaprenol (Glc-PP-C55). Also possesses a weak galactose-1-P transferase activity. The polypeptide is UDP-glucose:undecaprenyl-phosphate glucose-1-phosphate transferase (pssY) (Caulobacter vibrioides (strain ATCC 19089 / CIP 103742 / CB 15) (Caulobacter crescentus)).